We begin with the raw amino-acid sequence, 277 residues long: UPF0496 protein At3g48650 (277 aa).

2 consecutive transmembrane segments (helical) span residues 124–144 (YIFFAAALLSVLALWIYLGAV) and 145–165 (SLVVAAKVVIEVATPSIAPLW).

The protein belongs to the UPF0496 family.

The protein localises to the membrane. The chain is UPF0496 protein At3g48650 from Arabidopsis thaliana (Mouse-ear cress).